The primary structure comprises 380 residues: Cytochrome b (380 aa).

The next 4 helical transmembrane spans lie at 34–54 (FGSLLAMCLMTQIITGLLLAT), 78–99 (WLIRNLHANGASFFFICIYLHI), 114–134 (WNTGVILLLTLMATAFVGYVL), and 179–199 (FFALHFLLPFIIAGITIIHLA). Positions 84 and 98 each coordinate heme b. Heme b contacts are provided by H183 and H197. Position 202 (H202) interacts with a ubiquinone. Transmembrane regions (helical) follow at residues 227–247 (LKDILGLALMITPLLTLALFS), 289–309 (LGGVLALAASVLILLLIPFLH), 321–341 (LSQILFWLLAANLLILTWIGS), and 348–368 (FIIIGQLASFSYFTTILILFP).

This sequence belongs to the cytochrome b family. The cytochrome bc1 complex contains 11 subunits: 3 respiratory subunits (MT-CYB, CYC1 and UQCRFS1), 2 core proteins (UQCRC1 and UQCRC2) and 6 low-molecular weight proteins (UQCRH/QCR6, UQCRB/QCR7, UQCRQ/QCR8, UQCR10/QCR9, UQCR11/QCR10 and a cleavage product of UQCRFS1). This cytochrome bc1 complex then forms a dimer. Heme b is required as a cofactor.

The protein resides in the mitochondrion inner membrane. Its function is as follows. Component of the ubiquinol-cytochrome c reductase complex (complex III or cytochrome b-c1 complex) that is part of the mitochondrial respiratory chain. The b-c1 complex mediates electron transfer from ubiquinol to cytochrome c. Contributes to the generation of a proton gradient across the mitochondrial membrane that is then used for ATP synthesis. The polypeptide is Cytochrome b (MT-CYB) (Callipepla gambelii (Gambel's quail)).